The chain runs to 152 residues: Transcriptional repressor NrdR (152 aa).

The segment at 3–34 (CPFCNHGELKVIDSRNAPEANAIKRRRECLNC) is a zinc-finger region. Residues 48–138 (LQVLKRDGRY…VYRRFKDVGE (91 aa)) enclose the ATP-cone domain.

Belongs to the NrdR family. The cofactor is Zn(2+).

Its function is as follows. Negatively regulates transcription of bacterial ribonucleotide reductase nrd genes and operons by binding to NrdR-boxes. The chain is Transcriptional repressor NrdR from Chlamydia abortus (strain DSM 27085 / S26/3) (Chlamydophila abortus).